The primary structure comprises 631 residues: Mini-chromosome maintenance complex-binding protein (631 aa).

Polar residues-rich tracts occupy residues 148–157 and 173–192; these read ARVVPSTSYV and TQCQ…SESH. Positions 148–218 are disordered; sequence ARVVPSTSYV…SSSSHCTSSL (71 aa). The span at 193–202 shows a compositional bias: basic and acidic residues; the sequence is GNTEPKRQET. Residues 206-217 show a composition bias toward low complexity; it reads SQDSSSSHCTSS.

This sequence belongs to the MCMBP family. As to quaternary structure, interacts with the mcm complex: associates with the mcm3-7 complex which lacks mcm2, while it does not interact with the mcm complex when mcm2 is present (mcm2-7 complex).

Its subcellular location is the nucleus. Associated component of the mcm complex that acts as a regulator of DNA replication. Binds to the MCM complex during late S phase and promotes the disassembly of the mcm complex from chromatin, thereby acting as a key regulator of pre-replication complex (pre-RC) unloading from replicated DNA. Can dissociate the mcm complex without addition of ATP; probably acts by destabilizing interactions of each individual subunits of the mcm complex. Required for sister chromatid cohesion. The sequence is that of Mini-chromosome maintenance complex-binding protein (mcmbp) from Danio rerio (Zebrafish).